The chain runs to 87 residues: Small ribosomal subunit protein bS20 (87 aa).

Residues 1 to 15 (MANHKSAAKRARQSI) are compositionally biased toward basic residues. Residues 1–29 (MANHKSAAKRARQSIRKTAVNNARKSTVK) form a disordered region. The span at 19 to 29 (AVNNARKSTVK) shows a compositional bias: polar residues.

It belongs to the bacterial ribosomal protein bS20 family.

In terms of biological role, binds directly to 16S ribosomal RNA. This Bdellovibrio bacteriovorus (strain ATCC 15356 / DSM 50701 / NCIMB 9529 / HD100) protein is Small ribosomal subunit protein bS20.